The chain runs to 289 residues: Nodulation protein NolT (289 aa).

A signal peptide spans 1 to 33 (MFGSAHGDTTSSDTSGRRPLRLVVLPLLLALSS). Cys-34 carries the N-palmitoyl cysteine lipid modification. Cys-34 carries the S-diacylglycerol cysteine lipid modification. Residues 233 to 253 (VAVGVGAAVFAVTCYLLFIVL) form a helical membrane-spanning segment.

This sequence belongs to the YscJ lipoprotein family.

Its subcellular location is the cell outer membrane. In terms of biological role, regulates cultivar-specific nodulation of soybean. The protein is Nodulation protein NolT (nolT) of Rhizobium fredii (Sinorhizobium fredii).